Reading from the N-terminus, the 488-residue chain is (S)-N-methylcoclaurine 3'-hydroxylase isozyme 2 (488 aa).

A helical membrane pass occupies residues 3-23; that stretch reads VVTVALIAVIISSILYLLFGS. Residue Cys-430 coordinates heme.

It belongs to the cytochrome P450 family. Requires heme as cofactor.

It localises to the endoplasmic reticulum membrane. The protein localises to the microsome membrane. The catalysed reaction is (S)-N-methylcoclaurine + reduced [NADPH--hemoprotein reductase] + O2 = (S)-3'-hydroxy-N-methylcoclaurine + oxidized [NADPH--hemoprotein reductase] + H2O + H(+). It participates in alkaloid biosynthesis; (S)-reticuline biosynthesis; (S)-reticuline from (S)-norcoclaurine: step 3/4. Functionally, 3'-hydroxylation of (S)-N-methylcoclaurine. The sequence is that of (S)-N-methylcoclaurine 3'-hydroxylase isozyme 2 (CYP80B2) from Eschscholzia californica (California poppy).